Consider the following 465-residue polypeptide: Tyrosine 3-monooxygenase (465 aa).

Fe cation contacts are provided by His-294, His-299, and Glu-339.

This sequence belongs to the biopterin-dependent aromatic amino acid hydroxylase family. The cofactor is Fe(2+).

The protein localises to the cytoplasm. The protein resides in the perinuclear region. The catalysed reaction is (6R)-L-erythro-5,6,7,8-tetrahydrobiopterin + L-tyrosine + O2 = (4aS,6R)-4a-hydroxy-L-erythro-5,6,7,8-tetrahydrobiopterin + L-dopa. The protein operates within catecholamine biosynthesis; dopamine biosynthesis; dopamine from L-tyrosine: step 1/2. In Schistosoma mansoni (Blood fluke), this protein is Tyrosine 3-monooxygenase (TH).